The chain runs to 129 residues: uncharacterized protein (129 aa).

It localises to the cytoplasm. The protein resides in the cytosol. Its subcellular location is the nucleus. This is an uncharacterized protein from Schizosaccharomyces pombe (strain 972 / ATCC 24843) (Fission yeast).